We begin with the raw amino-acid sequence, 230 residues long: Large ribosomal subunit protein uL1 (230 aa).

It belongs to the universal ribosomal protein uL1 family. Part of the 50S ribosomal subunit.

In terms of biological role, binds directly to 23S rRNA. The L1 stalk is quite mobile in the ribosome, and is involved in E site tRNA release. Its function is as follows. Protein L1 is also a translational repressor protein, it controls the translation of the L11 operon by binding to its mRNA. The protein is Large ribosomal subunit protein uL1 of Bacillus mycoides (strain KBAB4) (Bacillus weihenstephanensis).